A 371-amino-acid chain; its full sequence is Neuropeptide S receptor (371 aa).

Residues 1-21 (MPANFTEGSFDSSGTGQTLDS) show a composition bias toward polar residues. The interval 1–22 (MPANFTEGSFDSSGTGQTLDSS) is disordered. Residues 1 to 52 (MPANFTEGSFDSSGTGQTLDSSPVACTETVTFTEVVEGKEWGSFYYSFKTEQ) lie on the Extracellular side of the membrane. A glycan (N-linked (GlcNAc...) asparagine) is linked at Asn4. A helical membrane pass occupies residues 53 to 73 (LITLWVLFVFTIVGNSVVLFS). Topologically, residues 74 to 82 (TWRRKKKSR) are cytoplasmic. A helical membrane pass occupies residues 83–103 (MTFFVTQLAITDSFTGLVNIL). Residues 104–123 (TDINWRFTGDFTAPDLVCRV) lie on the Extracellular side of the membrane. The cysteines at positions 121 and 197 are disulfide-linked. A helical membrane pass occupies residues 124 to 144 (VRYLQVVLLYASTYVLVSLSI). The Cytoplasmic segment spans residues 145–164 (DRYHAIVYPMKFLQGEKQAR). The helical transmembrane segment at 165 to 185 (VLIVIAWSLSFLFSIPTLIIF) threads the bilayer. Residues 186–212 (GKRTLSNGEVQCWALWPDDSYWTPYMT) lie on the Extracellular side of the membrane. A helical membrane pass occupies residues 213–233 (IVAFLVYFIPLTIISIMYGIV). At 234–275 (IRTIWIKSKTYETVISNCSDGKLCSSYNRGLISKAKIKAIKY) the chain is on the cytoplasmic side. A helical membrane pass occupies residues 276–296 (SIIIILAFICCWSPYFLFDIL). Residues 297-312 (DNFNLLPDTQERFYAS) lie on the Extracellular side of the membrane. The chain crosses the membrane as a helical span at residues 313 to 333 (VIIQNLPALNSAINPLIYCVF). Residues 334–371 (SSSISFPCREQRSQDSRMTFRERTERHEMQILSKPEFI) lie on the Cytoplasmic side of the membrane.

This sequence belongs to the G-protein coupled receptor 1 family. Vasopressin/oxytocin receptor subfamily. As to expression, isoform 4 is ubiquitous; it is detected in glandular epithelia of bronchus, stomach, small intestine, colon, uterus, esophagus, spleen, kidney, pancreas, prostate and breast. Isoform 1 is detected in uterus, colon and prostate, and in the smooth muscle cell layer in bronchial and arterial walls (at protein level). Isoform 1 is predominantly expressed in smooth muscle. Isoform 4 is predominantly expressed in epithelial cells. In bronchial biopsies, it is expressed in smooth muscle cells of asthma patients, but not in control patients; whereas in epithelial cells, its expression is consistently stronger in asthma patients.

The protein resides in the cell membrane. It localises to the cytoplasm. Its function is as follows. G-protein coupled receptor for neuropeptide S (NPS). Promotes mobilization of intracellular Ca(2+) stores. Inhibits cell growth in response to NPS binding. Involved in pathogenesis of asthma and other IgE-mediated diseases. The chain is Neuropeptide S receptor (NPSR1) from Homo sapiens (Human).